The chain runs to 87 residues: Small archaeal modifier protein 1 (87 aa).

Gly87 carries the 1-thioglycine; alternate modification. At Gly87 the chain carries Glycyl adenylate; alternate. Residue Gly87 forms a Glycyl lysine isopeptide (Gly-Lys) (interchain with K-? in acceptor proteins); alternate linkage.

Post-translationally, the C-terminal glycine is likely acyl-adenylated (-COAMP) by UbaA, and also probably thiocarboxylated (-COSH) to function in sulfur transfer.

Functions as a protein modifier covalently attached to lysine residues of substrate proteins, as well as a sulfur carrier in molybdenum cofactor (MoCo) biosynthesis. The protein modification process is termed sampylation and involves the formation of an isopeptide bond between the SAMP1 C-terminal glycine carboxylate and the epsilon-amino group of lysine residues on target proteins. May serve as a proteolytic signal in the cell to target proteins for degradation by proteasomes. In Haloferax volcanii (strain ATCC 29605 / DSM 3757 / JCM 8879 / NBRC 14742 / NCIMB 2012 / VKM B-1768 / DS2) (Halobacterium volcanii), this protein is Small archaeal modifier protein 1 (samp1).